A 131-amino-acid polypeptide reads, in one-letter code: Hypocretin neuropeptide precursor (131 aa).

The signal sequence occupies residues 1-33 (MNLPSTKVSWAAVTLLLLLLLLPPALLSSGAAA). Gln-34 carries the pyrrolidone carboxylic acid modification. 2 disulfides stabilise this stretch: Cys-39-Cys-45 and Cys-40-Cys-47. Residue Leu-66 is modified to Leucine amide. Met-97 is modified (methionine amide). Positions 98-131 (GRRAGAEPAPRPCLGRRCSAPAAASVAPGGQSGI) are cleaved as a propeptide — removed in mature form.

This sequence belongs to the orexin family. Post-translationally, specific enzymatic cleavages at paired basic residues yield the different active peptides. As to expression, abundantly expressed in subthalamic nucleus but undetectable in other brain regions tested (hypothalamus was not tested) and in heart, placenta, lung, liver, skeletal muscle, kidney and pancreas.

It localises to the rough endoplasmic reticulum. It is found in the cytoplasmic vesicle. The protein resides in the synapse. Neuropeptides that play a significant role in the regulation of food intake and sleep-wakefulness, possibly by coordinating the complex behavioral and physiologic responses of these complementary homeostatic functions. A broader role in the homeostatic regulation of energy metabolism, autonomic function, hormonal balance and the regulation of body fluids, is also suggested. In terms of biological role, binds to orexin receptors HCRTR1/OX1R and HCRTR2/OX2R with a high affinity. Stimulates food intake. Modulates pituitary luteinizing hormone secretion in an ovarian steroid-dependent manner. Functionally, binds to orexin receptor HCRTR2/OX2R only. Stimulates food intake. Modulates pituitary luteinizing hormone secretion in an ovarian steroid-dependent manner. In Homo sapiens (Human), this protein is Hypocretin neuropeptide precursor.